Here is a 446-residue protein sequence, read N- to C-terminus: Adenylosuccinate synthetase (446 aa).

GTP-binding positions include 20–26 and 48–50; these read GDEGKGK and GHT. Catalysis depends on Asp-21, which acts as the Proton acceptor. 2 residues coordinate Mg(2+): Asp-21 and Gly-48. IMP is bound by residues 21 to 24, 46 to 49, Thr-137, Arg-151, Gln-232, Thr-247, and Arg-319; these read DEGK and NAGH. His-49 acts as the Proton donor in catalysis. 315-321 provides a ligand contact to substrate; it reads SVTGRPR. GTP is bound by residues Arg-321, 347–349, and 429–431; these read KLD and STG.

This sequence belongs to the adenylosuccinate synthetase family. In terms of assembly, homodimer. The cofactor is Mg(2+).

It is found in the cytoplasm. It carries out the reaction IMP + L-aspartate + GTP = N(6)-(1,2-dicarboxyethyl)-AMP + GDP + phosphate + 2 H(+). It participates in purine metabolism; AMP biosynthesis via de novo pathway; AMP from IMP: step 1/2. Functionally, plays an important role in the de novo pathway of purine nucleotide biosynthesis. Catalyzes the first committed step in the biosynthesis of AMP from IMP. The chain is Adenylosuccinate synthetase from Ralstonia pickettii (strain 12J).